Reading from the N-terminus, the 475-residue chain is Methylenetetrahydrofolate--tRNA-(uracil-5-)-methyltransferase TrmFO (475 aa).

9–14 lines the FAD pocket; the sequence is GGGLAG. The segment at 427-447 is disordered; the sequence is APRNETGRRLRGPEKAALKKR.

It belongs to the MnmG family. TrmFO subfamily. FAD serves as cofactor.

Its subcellular location is the cytoplasm. It catalyses the reaction uridine(54) in tRNA + (6R)-5,10-methylene-5,6,7,8-tetrahydrofolate + NADH + H(+) = 5-methyluridine(54) in tRNA + (6S)-5,6,7,8-tetrahydrofolate + NAD(+). The enzyme catalyses uridine(54) in tRNA + (6R)-5,10-methylene-5,6,7,8-tetrahydrofolate + NADPH + H(+) = 5-methyluridine(54) in tRNA + (6S)-5,6,7,8-tetrahydrofolate + NADP(+). Catalyzes the folate-dependent formation of 5-methyl-uridine at position 54 (M-5-U54) in all tRNAs. This is Methylenetetrahydrofolate--tRNA-(uracil-5-)-methyltransferase TrmFO from Methylobacterium radiotolerans (strain ATCC 27329 / DSM 1819 / JCM 2831 / NBRC 15690 / NCIMB 10815 / 0-1).